An 851-amino-acid polypeptide reads, in one-letter code: DNA mismatch repair protein MutS (851 aa).

ATP is bound at residue 602–609 (GPNMSGKS).

Belongs to the DNA mismatch repair MutS family.

Its function is as follows. This protein is involved in the repair of mismatches in DNA. It is possible that it carries out the mismatch recognition step. This protein has a weak ATPase activity. In Streptococcus pyogenes serotype M4 (strain MGAS10750), this protein is DNA mismatch repair protein MutS.